The following is a 360-amino-acid chain: Glutamate 5-kinase (360 aa).

Lysine 7 provides a ligand contact to ATP. Positions 47, 134, and 146 each coordinate substrate. Residues 166–167 (TD) and 210–216 (TGGISTK) contribute to the ATP site. The PUA domain maps to 275–356 (VGKITLDDGA…SSIIVVHRDV (82 aa)).

It belongs to the glutamate 5-kinase family.

It localises to the cytoplasm. It carries out the reaction L-glutamate + ATP = L-glutamyl 5-phosphate + ADP. It functions in the pathway amino-acid biosynthesis; L-proline biosynthesis; L-glutamate 5-semialdehyde from L-glutamate: step 1/2. Its function is as follows. Catalyzes the transfer of a phosphate group to glutamate to form L-glutamate 5-phosphate. The polypeptide is Glutamate 5-kinase (Prochlorococcus marinus (strain MIT 9312)).